The primary structure comprises 268 residues: Leucyl/phenylalanyl-tRNA--protein transferase (268 aa).

Belongs to the L/F-transferase family.

The protein resides in the cytoplasm. The catalysed reaction is N-terminal L-lysyl-[protein] + L-leucyl-tRNA(Leu) = N-terminal L-leucyl-L-lysyl-[protein] + tRNA(Leu) + H(+). It carries out the reaction N-terminal L-arginyl-[protein] + L-leucyl-tRNA(Leu) = N-terminal L-leucyl-L-arginyl-[protein] + tRNA(Leu) + H(+). The enzyme catalyses L-phenylalanyl-tRNA(Phe) + an N-terminal L-alpha-aminoacyl-[protein] = an N-terminal L-phenylalanyl-L-alpha-aminoacyl-[protein] + tRNA(Phe). Functionally, functions in the N-end rule pathway of protein degradation where it conjugates Leu, Phe and, less efficiently, Met from aminoacyl-tRNAs to the N-termini of proteins containing an N-terminal arginine or lysine. This is Leucyl/phenylalanyl-tRNA--protein transferase from Psychrobacter arcticus (strain DSM 17307 / VKM B-2377 / 273-4).